The chain runs to 548 residues: MEAPRSDQAHTDATTPMEAIRTTSLGTNNYGPVPDDYLDLPVREVNDGADLREYITETRTGEIIKPIKSNVTGKTEDWKMVTFTIDDPENPKNWSKAFKWYCTMVVAFTCFVVAFCSSVITADVEGPIEEFGIGREASLVVITVFVIGFGLGPMVFAPMSEIVGRRPVYALTLALAVIFVIPCAVSKNIGTLIVCRLIDGIAFSAPMTLVGGTLADLWKSEERGVPMAAFSAAPFIGPAIGPLVGGYLADNCGWRWLYWIQLILAFVAWVMITFTVPETFAPILLKKRAQKLRKAEDDPKYTTETELDARPMGEKLRIFLFRPFQLLFLEPIVLFISLYMSVIYGLLYMFFVAYPIVYMGGKGWSASNTGLMFIPLAIGVIFSACCAPFVNNHYLKVSVAYGGKPPAEKRLIPMMWACWCIPSGLFVFAWTSYPDLHWMGPAMGGFLIGVGVILLYNSANNYLVDTYQHQAASALAAKTFIRSIWGACTVLFTEQMYERLGDQWASTLLAFIGLACCAIPYVFYFKGESIRRFSKFAFSDDEEKAIKA.

Over residues 1-10 (MEAPRSDQAH) the composition is skewed to basic and acidic residues. The interval 1 to 32 (MEAPRSDQAHTDATTPMEAIRTTSLGTNNYGP) is disordered. Positions 21-30 (RTTSLGTNNY) are enriched in polar residues. N-linked (GlcNAc...) asparagine glycans are attached at residues Asn70 and Asn93. Helical transmembrane passes span 100–120 (WYCT…SSVI), 139–159 (LVVI…FAPM), 174–194 (ALAV…TLIV), 197–217 (LIDG…LADL), 224–244 (GVPM…GPLV), 256–276 (WLYW…TFTV), 332–352 (IVLF…MFFV), 370–390 (GLMF…APFV), 411–431 (LIPM…FAWT), 436–456 (LHWM…ILLY), 471–493 (AASA…VLFT), and 505–525 (ASTL…VFYF). Residues 258–269 (YWIQLILAFVAW) carry the Peroxisomal targeting signal motif.

The protein belongs to the major facilitator superfamily. DHA1 family. Polyamines/proton antiporter (TC 2.A.1.2.16) subfamily.

Its subcellular location is the peroxisome membrane. Its function is as follows. MFS-type transporter involved in penicillin production, most likely through the translocation of side-chain precursors (phenylacetic acid and phenoxyacetic acid) from the cytosol to the peroxisomal lumen across the peroxisomal membrane. This Penicillium rubens (strain ATCC 28089 / DSM 1075 / NRRL 1951 / Wisconsin 54-1255) (Penicillium chrysogenum) protein is MFS-rype transporter paaT.